A 185-amino-acid polypeptide reads, in one-letter code: Photosystem I assembly protein Ycf4 (185 aa).

2 helical membrane passes run 20-40 (GNFFWACILFLGSLGFLSVGA) and 57-77 (ILFFPQGVVMSFYGIAGLFIS).

It belongs to the Ycf4 family.

It is found in the plastid. Its subcellular location is the chloroplast thylakoid membrane. Its function is as follows. Seems to be required for the assembly of the photosystem I complex. The chain is Photosystem I assembly protein Ycf4 from Agrostis stolonifera (Creeping bentgrass).